A 279-amino-acid chain; its full sequence is Energy-coupling factor transporter ATP-binding protein EcfA1 (279 aa).

In terms of domain architecture, ABC transporter spans 5–240 (IELKKVTFNY…GDELLQLGLD (236 aa)). 40–47 (GHNGSGKS) lines the ATP pocket.

Belongs to the ABC transporter superfamily. Energy-coupling factor EcfA family. Forms a stable energy-coupling factor (ECF) transporter complex composed of 2 membrane-embedded substrate-binding proteins (S component), 2 ATP-binding proteins (A component) and 2 transmembrane proteins (T component).

It is found in the cell membrane. Its function is as follows. ATP-binding (A) component of a common energy-coupling factor (ECF) ABC-transporter complex. Unlike classic ABC transporters this ECF transporter provides the energy necessary to transport a number of different substrates. The sequence is that of Energy-coupling factor transporter ATP-binding protein EcfA1 from Streptococcus pyogenes serotype M12 (strain MGAS2096).